The chain runs to 197 residues: dTTP/UTP pyrophosphatase (197 aa).

Aspartate 70 (proton acceptor) is an active-site residue.

The protein belongs to the Maf family. YhdE subfamily. It depends on a divalent metal cation as a cofactor.

The protein localises to the cytoplasm. It carries out the reaction dTTP + H2O = dTMP + diphosphate + H(+). The catalysed reaction is UTP + H2O = UMP + diphosphate + H(+). Nucleoside triphosphate pyrophosphatase that hydrolyzes dTTP and UTP. May have a dual role in cell division arrest and in preventing the incorporation of modified nucleotides into cellular nucleic acids. The polypeptide is dTTP/UTP pyrophosphatase (yceF) (Shigella dysenteriae serotype 1 (strain Sd197)).